The following is a 114-amino-acid chain: UPF0342 protein LSL_0473 (114 aa).

The protein belongs to the UPF0342 family.

The sequence is that of UPF0342 protein LSL_0473 from Ligilactobacillus salivarius (strain UCC118) (Lactobacillus salivarius).